The primary structure comprises 233 residues: Sugar fermentation stimulation protein homolog (233 aa).

This sequence belongs to the SfsA family.

The sequence is that of Sugar fermentation stimulation protein homolog from Saccharophagus degradans (strain 2-40 / ATCC 43961 / DSM 17024).